We begin with the raw amino-acid sequence, 619 residues long: Keratin, type II cytoskeletal 1 (619 aa).

Residues 1–180 (MSRHFSSRSG…DPEIQKVKTR (180 aa)) are head. At Arg12 the chain carries Omega-N-methylarginine. Residues Ser18 and Ser21 each carry the phosphoserine modification. A disordered region spans residues 28 to 49 (QRRTTSSSVRHSGGGGGRFSGG). Residues 39–49 (SGGGGGRFSGG) are compositionally biased toward gly residues. Omega-N-methylarginine is present on Arg45. At Ser68 the chain carries Phosphoserine. The stretch at 173-477 (EIQKVKTRER…ELMNTKLALD (305 aa)) forms a coiled coil. The interval 181 to 216 (EREQIKSLNNQFASFIDKVRFLEQQNQVLQTKWELL) is coil 1A. Residues 181–494 (EREQIKSLNN…TLLEGEESRM (314 aa)) form the IF rod domain. The interval 217-235 (QQVDTSTRTHSLEPYFENY) is linker 1. The segment at 236–327 (ISNLRRRVDQ…TLYQAELSQM (92 aa)) is coil 1B. Lys277 carries the post-translational modification N6,N6-dimethyllysine. Residues 328 to 351 (QTQISETNVILSMDNNRSLDLDSI) form a linker 12 region. Ser345 carries the post-translational modification Phosphoserine. Positions 352–490 (ISEVKAQYEE…ATYRTLLEGE (139 aa)) are coil 2. Positions 491 to 619 (ESRMSGECAP…VSTSYSRAVR (129 aa)) are tail. 2 positions are modified to omega-N-methylarginine: Arg519 and Arg575. A disordered region spans residues 559–619 (GGGGGGYGSS…VSTSYSRAVR (61 aa)). The span at 573–595 (GHRGGSGGGSRSGGSSGGRGSSS) shows a compositional bias: gly residues. Over residues 596-606 (GGIKTSSGSSS) the composition is skewed to low complexity. Over residues 607–619 (VKFVSTSYSRAVR) the composition is skewed to polar residues.

It belongs to the intermediate filament family. Heterotetramer of two type I and two type II keratins. Heterodimer with KRT10. Two heterodimers of KRT1 and KRT10 form a heterotetramer. Forms a heterodimer with KRT14; the interaction is more abundant in the absence of KRT5. Interacts with ITGB1 in the presence of RACK1 and SRC, and with RACK1. Interacts with C1QBP; the association represents a cell surface kininogen receptor. Interacts with EPPK1; interaction is dependent of higher-order structure of intermediate filament. Undergoes deimination of some arginine residues (citrullination).

Its subcellular location is the cell membrane. It localises to the cytoplasm. Its function is as follows. May regulate the activity of kinases such as PKC and SRC via binding to integrin beta-1 (ITB1) and the receptor of activated protein C kinase 1 (RACK1). In complex with C1QBP is a high affinity receptor for kininogen-1/HMWK. The sequence is that of Keratin, type II cytoskeletal 1 from Canis lupus familiaris (Dog).